The sequence spans 236 residues: Small ribosomal subunit protein uS3 (236 aa).

In terms of domain architecture, KH type-2 spans 39–107 (IRKFLKREMY…EVFINIKEAK (69 aa)). Residues 214 to 229 (PEKKEESKSGDKEVRS) show a composition bias toward basic and acidic residues. A disordered region spans residues 214–236 (PEKKEESKSGDKEVRSKSRRGRQ).

Belongs to the universal ribosomal protein uS3 family. In terms of assembly, part of the 30S ribosomal subunit. Forms a tight complex with proteins S10 and S14.

Its function is as follows. Binds the lower part of the 30S subunit head. Binds mRNA in the 70S ribosome, positioning it for translation. In Helicobacter hepaticus (strain ATCC 51449 / 3B1), this protein is Small ribosomal subunit protein uS3.